The following is a 198-amino-acid chain: Imidazoleglycerol-phosphate dehydratase (198 aa).

Belongs to the imidazoleglycerol-phosphate dehydratase family.

It localises to the cytoplasm. It catalyses the reaction D-erythro-1-(imidazol-4-yl)glycerol 3-phosphate = 3-(imidazol-4-yl)-2-oxopropyl phosphate + H2O. The protein operates within amino-acid biosynthesis; L-histidine biosynthesis; L-histidine from 5-phospho-alpha-D-ribose 1-diphosphate: step 6/9. In Janthinobacterium sp. (strain Marseille) (Minibacterium massiliensis), this protein is Imidazoleglycerol-phosphate dehydratase.